Here is a 267-residue protein sequence, read N- to C-terminus: MNALLTNPFKERLRKGEVQIGLWLSSTTAYMAEIAATSGYDWLLIDGEHAPNTIQDLYHQLQAVAPYASHPVIRPVEGSKPLIKQVLDIGAQTLLIPMVDTADQARQVVSATRYPPYGERGVGASVARAARWGRIENYMAQVNDSLCLLVQVESKTALDNLDEILDVEGIDGVFIGPADLSASLGYPDNAGHPEVQRIIETSIRRIRAAGKAAGFLAVAPDMAQQCLAWGANFVAVGVDTMLYSDALDQRLAMFKSGKNGPRVKGSY.

The active-site Proton acceptor is histidine 49. Glutamine 151 contributes to the substrate binding site. Position 153 (glutamate 153) interacts with Mg(2+). 2 residues coordinate substrate: alanine 178 and aspartate 179. Aspartate 179 contributes to the Mg(2+) binding site.

Belongs to the HpcH/HpaI aldolase family. KDR aldolase subfamily. Homohexamer. Mg(2+) is required as a cofactor.

It catalyses the reaction 2-dehydro-3-deoxy-L-rhamnonate = (S)-lactaldehyde + pyruvate. Catalyzes the reversible retro-aldol cleavage of 2-keto-3-deoxy-L-rhamnonate (KDR) to pyruvate and lactaldehyde. This chain is 2-keto-3-deoxy-L-rhamnonate aldolase, found in Escherichia coli (strain UTI89 / UPEC).